The chain runs to 253 residues: Ubiquinone/menaquinone biosynthesis C-methyltransferase UbiE (253 aa).

S-adenosyl-L-methionine contacts are provided by residues threonine 76, aspartate 97, 125-126 (NA), and serine 142.

Belongs to the class I-like SAM-binding methyltransferase superfamily. MenG/UbiE family.

The enzyme catalyses a 2-demethylmenaquinol + S-adenosyl-L-methionine = a menaquinol + S-adenosyl-L-homocysteine + H(+). It catalyses the reaction a 2-methoxy-6-(all-trans-polyprenyl)benzene-1,4-diol + S-adenosyl-L-methionine = a 5-methoxy-2-methyl-3-(all-trans-polyprenyl)benzene-1,4-diol + S-adenosyl-L-homocysteine + H(+). It functions in the pathway quinol/quinone metabolism; menaquinone biosynthesis; menaquinol from 1,4-dihydroxy-2-naphthoate: step 2/2. The protein operates within cofactor biosynthesis; ubiquinone biosynthesis. Its function is as follows. Methyltransferase required for the conversion of demethylmenaquinol (DMKH2) to menaquinol (MKH2) and the conversion of 2-polyprenyl-6-methoxy-1,4-benzoquinol (DDMQH2) to 2-polyprenyl-3-methyl-6-methoxy-1,4-benzoquinol (DMQH2). The chain is Ubiquinone/menaquinone biosynthesis C-methyltransferase UbiE from Xanthomonas axonopodis pv. citri (strain 306).